Reading from the N-terminus, the 708-residue chain is Glutamate--tRNA ligase, cytoplasmic (708 aa).

2 interaction with ARC1 regions span residues 106-115 (NLRTFILGGL) and 141-157 (KVDV…EMDP). 205–207 (RFP) is an L-glutamate binding site. The 'HIGH' region signature appears at 210–219 (PSGYLHIGHA). H215 contributes to the ATP binding site. D241 serves as a coordination point for L-glutamate. Position 300 is a phosphothreonine (T300). L-glutamate contacts are provided by residues 382 to 386 (YDFCV) and R400. ATP-binding positions include E403 and 437–441 (LLSKR). Positions 437–441 (LLSKR) match the 'KMSKS' region motif.

The protein belongs to the class-I aminoacyl-tRNA synthetase family. Glutamate--tRNA ligase type 2 subfamily. Component of a yeast aminoacyl-tRNA synthase (aaRS) complex formed by methionyl-tRNA synthase MES1, glutamyl-tRNA synthase GUS1 and the tRNA aminoacylation cofactor ARC1 in a stoichiometric complex. Interacts (via N-ter) with ARC1 (via N-ter). Can also form a stable binary complex with ARC1 that is functional in terms of aminoacylation. ARC1 increases the affinity for cognate tRNAs due to the presence of a tRNA binding domain in the middle and C-terminal part of ARC1.

The protein resides in the cytoplasm. The protein localises to the mitochondrion. It carries out the reaction tRNA(Glu) + L-glutamate + ATP = L-glutamyl-tRNA(Glu) + AMP + diphosphate. Its function is as follows. Catalyzes the attachment of glutamate to tRNA(Glu) in a two-step reaction: glutamate is first activated by ATP to form Glu-AMP and then transferred to the acceptor end of tRNA(Glu). In mitochondria, constitutes the nondiscriminating glutamyl-tRNA synthase that generates the mitochondrial mischarged glutamyl-tRNA(Gln) substrate for the tRNA-dependent amidotransferase (AdT), which generates mitochondrial glutaminyl-tRNA(Gln) by transamidation of glutamyl-tRNA(Gln). The polypeptide is Glutamate--tRNA ligase, cytoplasmic (GUS1) (Saccharomyces cerevisiae (strain ATCC 204508 / S288c) (Baker's yeast)).